The sequence spans 528 residues: Na(+)/H(+) antiporter NhaB (528 aa).

The next 11 helical transmembrane spans lie at 23–45 (FAIL…IAGW), 66–86 (PGGL…TQVL), 95–115 (VLLL…LLLY), 130–164 (VSML…FYSI), 203–223 (LLMH…VGEP), 241–261 (IRMS…CFIV), 310–330 (LIVG…SVII), 349–369 (EEAL…GVII), 390–410 (LVIF…VFVG), 448–468 (ATPN…APLI), and 475–495 (MVMM…LAIE).

Belongs to the NhaB Na(+)/H(+) (TC 2.A.34) antiporter family.

It localises to the cell inner membrane. It catalyses the reaction 2 Na(+)(in) + 3 H(+)(out) = 2 Na(+)(out) + 3 H(+)(in). Its function is as follows. Na(+)/H(+) antiporter that extrudes sodium in exchange for external protons. The protein is Na(+)/H(+) antiporter NhaB of Shewanella amazonensis (strain ATCC BAA-1098 / SB2B).